The chain runs to 450 residues: Neuronal acetylcholine receptor subunit alpha-10 (450 aa).

The signal sequence occupies residues 1 to 24 (MGLRSHHLSLGLLLLFLLPAECLG). The Extracellular segment spans residues 25–237 (AEGRLALKLF…FTLLLRRRAA (213 aa)). N-linked (GlcNAc...) asparagine glycans are attached at residues Asn40 and Asn56. 2 disulfide bridges follow: Cys154–Cys168 and Cys218–Cys219. 3 consecutive transmembrane segments (helical) span residues 238 to 258 (AYVC…PLAF), 268 to 288 (VSLG…LAES), and 302 to 322 (YMAT…IMNL). Over 323–428 (HYCGPSVRPV…WKRLARVMDR (106 aa)) the chain is Cytoplasmic. Residues 355 to 380 (EPCGQSRPPELSPSPQSPEGGAGPPA) form a disordered region. A helical transmembrane segment spans residues 429-449 (FFLAIFFSMALVMSLLVLVQA).

It belongs to the ligand-gated ion channel (TC 1.A.9) family. Acetylcholine receptor (TC 1.A.9.1) subfamily. Alpha-10/CHRNA10 sub-subfamily. Forms homo- or heterooligomeric channels in conjunction with CHRNA10. The native outer hair cell receptor may be composed of CHRNA9:CHRNA10 heterooligomers. Found in the stoichiometric form (CHRNA9)2:(CHRNA10)3. In terms of tissue distribution, expressed in inner-ear tissue, tonsil, immortalized B-cells, cultured T-cells and peripheral blood lymphocytes.

It localises to the synaptic cell membrane. Its subcellular location is the cell membrane. It catalyses the reaction Ca(2+)(in) = Ca(2+)(out). It carries out the reaction K(+)(in) = K(+)(out). The enzyme catalyses Na(+)(in) = Na(+)(out). The catalysed reaction is Mg(2+)(in) = Mg(2+)(out). Activated by a myriad of ligands such as acetylcholine. AChR activity is inhibited by the antagonists alpha-conotoxins RgIA and GeXXA, small disulfide-constrained peptides from cone snails. Its function is as follows. Component of neuronal acetylcholine receptors (nAChRs) that function as pentameric, ligand-gated cation channels with high calcium permeability. nAChRs are excitatory neurotrasnmitter receptors formed by a collection of nAChR subunits. Each nAchR subunit confers differential attributes to channel properties, including activation, deactivation and desensitization kinetics, pH sensitivity, cation permeability, and binding to allosteric modulators. Forms heteropentamers with CHRNA9. Expressed in the inner ear, in sympathetic neurons and in other non-neuronal cells, such as skin keratinocytes and lymphocytes. nAChR formed by CHRNA9:CHRNA10 is involved in modulation of auditory stimuli. The channel is permeable to a range of divalent cations including calcium, the influx of which may activate a potassium current which hyperpolarizes the cell membrane. In the ear, mediates synaptic transmission between efferent olivocochlear fibers and hair cells of the cochlea, this may lead to a reduction in basilar membrane motion, altering the activity of auditory nerve fibers and reducing the range of dynamic hearing. This may protect against acoustic trauma. May also regulate keratinocyte adhesion. This chain is Neuronal acetylcholine receptor subunit alpha-10, found in Homo sapiens (Human).